Here is a 220-residue protein sequence, read N- to C-terminus: N-(5'-phosphoribosyl)anthranilate isomerase (220 aa).

The protein belongs to the TrpF family.

It catalyses the reaction N-(5-phospho-beta-D-ribosyl)anthranilate = 1-(2-carboxyphenylamino)-1-deoxy-D-ribulose 5-phosphate. It participates in amino-acid biosynthesis; L-tryptophan biosynthesis; L-tryptophan from chorismate: step 3/5. The polypeptide is N-(5'-phosphoribosyl)anthranilate isomerase (Leptothrix cholodnii (strain ATCC 51168 / LMG 8142 / SP-6) (Leptothrix discophora (strain SP-6))).